The following is a 752-amino-acid chain: Photosystem I P700 chlorophyll a apoprotein A1 (752 aa).

8 consecutive transmembrane segments (helical) span residues Ile73–Ala96, Leu159–His182, Met198–Leu222, Thr294–Tyr312, Trp349–Tyr372, Leu388–Val414, Ala436–His458, and Phe533–Val551. [4Fe-4S] cluster contacts are provided by Cys575 and Cys584. 2 helical membrane passes run His591 to Trp612 and Leu666 to Phe688. A chlorophyll a'-binding site is contributed by His677. Met685 and Tyr693 together coordinate chlorophyll a. Position 694 (Trp694) interacts with phylloquinone. Residues Ala726 to Ala746 form a helical membrane-spanning segment.

This sequence belongs to the PsaA/PsaB family. As to quaternary structure, the PsaA/B heterodimer binds the P700 chlorophyll special pair and subsequent electron acceptors. PSI consists of a core antenna complex that captures photons, and an electron transfer chain that converts photonic excitation into a charge separation. The eukaryotic PSI reaction center is composed of at least 11 subunits. P700 is a chlorophyll a/chlorophyll a' dimer, A0 is one or more chlorophyll a, A1 is one or both phylloquinones and FX is a shared 4Fe-4S iron-sulfur center. serves as cofactor.

It localises to the plastid. It is found in the chloroplast thylakoid membrane. The enzyme catalyses reduced [plastocyanin] + hnu + oxidized [2Fe-2S]-[ferredoxin] = oxidized [plastocyanin] + reduced [2Fe-2S]-[ferredoxin]. PsaA and PsaB bind P700, the primary electron donor of photosystem I (PSI), as well as the electron acceptors A0, A1 and FX. PSI is a plastocyanin/cytochrome c6-ferredoxin oxidoreductase, converting photonic excitation into a charge separation, which transfers an electron from the donor P700 chlorophyll pair to the spectroscopically characterized acceptors A0, A1, FX, FA and FB in turn. Oxidized P700 is reduced on the lumenal side of the thylakoid membrane by plastocyanin or cytochrome c6. In Porphyra purpurea (Red seaweed), this protein is Photosystem I P700 chlorophyll a apoprotein A1.